Reading from the N-terminus, the 164-residue chain is UPF0303 protein RHECIAT_CH0003058 (164 aa).

The protein belongs to the UPF0303 family.

In Rhizobium etli (strain CIAT 652), this protein is UPF0303 protein RHECIAT_CH0003058.